Consider the following 340-residue polypeptide: Cytosolic Fe-S cluster assembly factor NBP35 (340 aa).

[4Fe-4S] cluster is bound by residues cysteine 31, cysteine 45, cysteine 48, and cysteine 54. Residue 84-91 (GKGGVGKS) participates in ATP binding. Residues cysteine 257 and cysteine 260 each coordinate [4Fe-4S] cluster.

This sequence belongs to the Mrp/NBP35 ATP-binding proteins family. NUBP1/NBP35 subfamily. Heterotetramer of 2 NBP35 and 2 CFD1 chains. The cofactor is [4Fe-4S] cluster.

The protein resides in the cytoplasm. Component of the cytosolic iron-sulfur (Fe/S) protein assembly (CIA) machinery. Required for maturation of extramitochondrial Fe-S proteins. The NBP35-CFD1 heterotetramer forms a Fe-S scaffold complex, mediating the de novo assembly of an Fe-S cluster and its transfer to target apoproteins. The protein is Cytosolic Fe-S cluster assembly factor NBP35 of Phaeosphaeria nodorum (strain SN15 / ATCC MYA-4574 / FGSC 10173) (Glume blotch fungus).